The chain runs to 161 residues: 2-C-methyl-D-erythritol 2,4-cyclodiphosphate synthase (161 aa).

2 residues coordinate a divalent metal cation: Asp10 and His12. 4-CDP-2-C-methyl-D-erythritol 2-phosphate contacts are provided by residues 10–12 (DVH) and 36–37 (HS). His44 contacts a divalent metal cation. Residues 58–60 (DIG), 134–137 (TTTE), Phe141, and Arg144 each bind 4-CDP-2-C-methyl-D-erythritol 2-phosphate.

The protein belongs to the IspF family. As to quaternary structure, homotrimer. A divalent metal cation serves as cofactor.

The enzyme catalyses 4-CDP-2-C-methyl-D-erythritol 2-phosphate = 2-C-methyl-D-erythritol 2,4-cyclic diphosphate + CMP. Its pathway is isoprenoid biosynthesis; isopentenyl diphosphate biosynthesis via DXP pathway; isopentenyl diphosphate from 1-deoxy-D-xylulose 5-phosphate: step 4/6. In terms of biological role, involved in the biosynthesis of isopentenyl diphosphate (IPP) and dimethylallyl diphosphate (DMAPP), two major building blocks of isoprenoid compounds. Catalyzes the conversion of 4-diphosphocytidyl-2-C-methyl-D-erythritol 2-phosphate (CDP-ME2P) to 2-C-methyl-D-erythritol 2,4-cyclodiphosphate (ME-CPP) with a corresponding release of cytidine 5-monophosphate (CMP). The chain is 2-C-methyl-D-erythritol 2,4-cyclodiphosphate synthase from Parabacteroides distasonis (strain ATCC 8503 / DSM 20701 / CIP 104284 / JCM 5825 / NCTC 11152).